The sequence spans 2013 residues: MWILALSLFQSFANVFSEEPHSSLYFVNASLQEVVFASTSGTLVPCPAAGIPPVTLRWYLATGEEIYDVPGIRHVHPNGTLQIFPFPPSSFSTLIHDNTYYCTAENPSGKIRSQDVHIKAVLREPYTVRVEDQKTMRGNVAVFKCIIPSSVEAYVTVVSWEKDTVSLVSGSRFLITSTGALYIKDVQNEDGLYNYRCITRHRYTGETRQSNSARLFVSDPANSAPSILDGFDHRKAMAGQRVELPCKALGHPEPDYRWLKDNMPLELSGRFQKTVTGLLIENSRPSDSGSYVCEVSNRYGTAKVIGRLYVKQPLKATISPRKVKSSVGSQVSLSCSVTGNEDQELSWYRNGEILNPGKNVRITGLNHANLIMDHMVKSDGGAYQCFVRKDKLSAQDYVQVVLEDGTPKIISAFSEKVVSPAEPVSLVCNVKGTPLPTVTWTLDDDPILKGSGHRISQMITSEGNVVSYLNISSSQVRDGGVYRCTANNSAGVVLYQARINVRGPASIRPMKNITAIAGRDTYIHCRVIGYPYYSIKWYKNANLLPFNHRQVAFENNGTLKLSDVQKEVDEGEYTCNVLVQPQLSTSQSVHVTVKVPPFIQPFEFPRFSIGQRVFIPCVVVSGDLPITITWQKDGRPIPASLGVTIDNIDFTSSLRISNLSLMHNGNYTCIARNEAAAVEHQSQLIVRVPPKFVVQPRDQDGIYGKAVILNCSAEGYPVPTIVWKFSKGAGVPQFQPIALNGRIQVLSNGSLLIKHVVEEDSGYYLCKVSNDVGADVSKSMYLTVKIPAMITSYPNTTLATQGQRKEMSCTAHGEKPIIVRWEKEDRIINPEMARYLVSTKEVGEEVISTLQILPTVREDSGFFSCHAINSYGEDRGIIQLTVQEPPDPPEIEIKDVKARTITLRWTMGFDGNSPITGYDIECKNKSDSWDSAQRTKDVSPQLNSATIIDIHPSSTYSIRMYAKNRIGKSEPSNEITITADEAAPDGPPQEVHLEPTSSQSIRVTWKAPKKHLQNGIIRGYQIGYREYSTGGNFQFNIISIDTTGDSEVYTLDNLNKFTQYGLVVQACNRAGTGPSSQEIITTTLEDVPSYPPENVQAIATSPESISISWSTLSKEALNGILQGFRVIYWANLIDGELGEIKNVTTTQPSLELDGLEKYTNYSIQVLAFTRAGDGVRSEQIFTRTKEDVPGPPAGVKAAAASASMVFVSWLPPLKLNGIIRKYTVFCSHPYPTVISEFEASPDSFSYRIPNLSRNRQYSVWVVAVTSAGRGNSSEIITVEPLAKAPARILTFSGTVTTPWMKDIVLPCKAVGDPSPAVKWMKDSNGTPSLVTIDGRRSIFSNGSFVIRTVKAEDSGYYSCVANNNWGSDEIILNLQVQVPPDQPRLTVSKTTSSSITLSWLPGDNGGSSIRGYILQYSEDNSEQWGSFPISPSERSYRLENLKCGTWYKFTLTAQNGVGPGRISEIIEAKTLGKEPQFSKEQELFASINTTRVRLNLIGWNDGGCPITSFTLEYRPFGTTVWTTAQRTSLSKSYILYDLQEATWYELQMRVCNSAGCAEKQANFATLNYDGSTIPPLIKSVVQSEEGLTTNEGLKILVTISCILVGVLLLFVLLLVVRRRRREQRLKRLRDAKSLAEMLMSKNTRTSDTLSKQQQTLRMHIDIPRAQLLIEERDTMETIDDRSTVLLTDADFGEAAKQKSLTVTHTVHYQSVSQATGPLVDVSDARPGTNPTTRRNAKAGPTARNRYASQWTLNRPHPTISAHTLTTDWRLPTPRATGSVDKESDSYSVSPSQDTDRARSSMVSTESASSTYEELARAYEHAKMEEQLRHAKFTITECFISDTSSEQLTAGTNEYTDSLTSSTPSESGICRFTASPPKPQDGGRVVNMAVPKAHRPGDLIHLPPYLRMDFLLNRGAPGTSRDLSLGQACLEPQKSRTLKRPTVLEPTPMEASSSTSSTREGQQSWQQGAVATLPQREGAELGQAAKMSSSQESLLDSRGHLKGNNPYAKSYTLV.

Positions 1-17 are cleaved as a signal peptide; it reads MWILALSLFQSFANVFS. Residues 19–1594 lie on the Extracellular side of the membrane; the sequence is EPHSSLYFVN…EGLTTNEGLK (1576 aa). Ig-like C2-type domains follow at residues 20-119, 125-216, 225-305, 313-401, 407-500, 504-592, 596-685, 690-783, and 787-883; these read PHSS…VHIK, PYTV…ARLF, PSIL…AKVI, PLKA…VQVV, PKII…ARIN, PASI…VHVT, PPFI…SQLI, PKFV…MYLT, and PAMI…LTVQ. 9 disulfides stabilise this stretch: cysteine 46–cysteine 102, cysteine 145–cysteine 197, cysteine 246–cysteine 293, cysteine 335–cysteine 385, cysteine 428–cysteine 484, cysteine 525–cysteine 575, cysteine 617–cysteine 669, cysteine 711–cysteine 766, and cysteine 809–cysteine 865. A glycan (N-linked (GlcNAc...) asparagine) is linked at asparagine 78. Asparagine 470 carries an N-linked (GlcNAc...) asparagine glycan. N-linked (GlcNAc...) asparagine glycosylation occurs at asparagine 666. Fibronectin type-III domains are found at residues 885-982, 987-1086, 1091-1187, and 1191-1285; these read PPDP…ADEA, PPQE…TLED, PPEN…TKED, and PPAG…AKAP. Asparagine 1160 and asparagine 1250 each carry an N-linked (GlcNAc...) asparagine glycan. In terms of domain architecture, Ig-like C2-type 10 spans 1285 to 1377; sequence PARILTFSGT…DEIILNLQVQ (93 aa). Cysteine 1307 and cysteine 1359 are disulfide-bonded. Fibronectin type-III domains are found at residues 1379–1473 and 1474–1575; these read PPDQ…TLGK and EPQF…TIPP. Residues 1595 to 1615 traverse the membrane as a helical segment; it reads ILVTISCILVGVLLLFVLLLV. The Cytoplasmic segment spans residues 1616–2013; sequence VRRRRREQRL…NPYAKSYTLV (398 aa). The tract at residues 1616–2013 is required for netrin-mediated axon repulsion of neuronal growth cones; that stretch reads VRRRRREQRL…NPYAKSYTLV (398 aa). Disordered stretches follow at residues 1718 to 1809 and 1920 to 2013; these read LVDV…SASS and RDLS…YTLV. Residues 1799–1809 show a composition bias toward low complexity; sequence SSMVSTESASS. Over residues 1949 to 1968 the composition is skewed to polar residues; it reads EASSSTSSTREGQQSWQQGA.

As to quaternary structure, homodimer; mediates homophilic interactions to promote cell adhesion. Interacts with DCC; the interaction is abolished in response to NTN1. Interacts (via extracellular domain) with NTN1. Interacts (via extracellular domain) with UNC5C (via Ig-like C2-type domain). Interacts with PTK2. Interacts with FYN. In terms of processing, phosphorylated at tyrosine residues. Phosphorylation is enhanced by NTN1.

It localises to the cell membrane. It is found in the cell projection. The protein localises to the axon. The protein resides in the dendrite. Its subcellular location is the growth cone. It localises to the synapse. Functionally, cell adhesion molecule that plays a role in neuronal self-avoidance. Promotes repulsion between specific neuronal processes of either the same cell or the same subtype of cells. Mediates within retinal amacrine and ganglion cell subtypes both isoneuronal self-avoidance for creating an orderly dendritic arborization and heteroneuronal self-avoidance to maintain the mosaic spacing between amacrine and ganglion cell bodies. Receptor for netrin required for axon guidance independently of and in collaboration with the receptor DCC. Might also collaborate with UNC5C in NTN1-mediated axon repulsion independently of DCC. In spinal cord development plays a role in guiding commissural axons projection and pathfinding across the ventral midline to reach the floor plate upon ligand binding. Mediates intracellular signaling by stimulating the activation of MAPK8 and MAP kinase p38. Adhesion molecule that promotes lamina-specific synaptic connections in the retina: expressed in specific subsets of interneurons and retinal ganglion cells (RGCs) and promotes synaptic connectivity via homophilic interactions. This Rattus norvegicus (Rat) protein is Cell adhesion molecule DSCAM (Dscam).